The sequence spans 349 residues: Methylthioribose-1-phosphate isomerase (349 aa).

Residues 49 to 51 (RGA), Arg-92, and Gln-199 each bind substrate. Residue Asp-240 is the Proton donor of the active site. 250–251 (NK) contributes to the substrate binding site.

Belongs to the eIF-2B alpha/beta/delta subunits family. MtnA subfamily.

The enzyme catalyses 5-(methylsulfanyl)-alpha-D-ribose 1-phosphate = 5-(methylsulfanyl)-D-ribulose 1-phosphate. It participates in amino-acid biosynthesis; L-methionine biosynthesis via salvage pathway; L-methionine from S-methyl-5-thio-alpha-D-ribose 1-phosphate: step 1/6. In terms of biological role, catalyzes the interconversion of methylthioribose-1-phosphate (MTR-1-P) into methylthioribulose-1-phosphate (MTRu-1-P). This is Methylthioribose-1-phosphate isomerase from Syntrophobacter fumaroxidans (strain DSM 10017 / MPOB).